A 54-amino-acid polypeptide reads, in one-letter code: MAVPKKRTSTSKKRIRKNVWKKKGYWAALKAFSLAKSLSTGNSKSFFVRQINLE.

It belongs to the bacterial ribosomal protein bL32 family.

The protein localises to the plastid. It localises to the chloroplast. This Gossypium barbadense (Sea Island cotton) protein is Large ribosomal subunit protein bL32c.